Consider the following 609-residue polypeptide: NADH-ubiquinone oxidoreductase chain 5 (609 aa).

15 helical membrane passes run 6-26, 35-55, 84-104, 116-138, 140-160, 171-191, 240-260, 272-292, 300-319, 330-350, 365-385, 409-429, 456-476, 481-501, and 581-601; these read SSIL…MTNL, YATS…LLFF, YFSI…MQFS, RFIK…NNLF, LFIG…WWYG, AILY…WFCL, TPVS…FLMI, IMTA…ICAL, IVAF…LGIN, THAF…HSLN, MPFT…MPFL, MITL…IYFV, LALG…PTNI, MPWH…AIAL, and GLIK…FILH.

Belongs to the complex I subunit 5 family. As to quaternary structure, core subunit of respiratory chain NADH dehydrogenase (Complex I) which is composed of 45 different subunits.

It is found in the mitochondrion inner membrane. The enzyme catalyses a ubiquinone + NADH + 5 H(+)(in) = a ubiquinol + NAD(+) + 4 H(+)(out). In terms of biological role, core subunit of the mitochondrial membrane respiratory chain NADH dehydrogenase (Complex I) which catalyzes electron transfer from NADH through the respiratory chain, using ubiquinone as an electron acceptor. Essential for the catalytic activity and assembly of complex I. In Rattus norvegicus (Rat), this protein is NADH-ubiquinone oxidoreductase chain 5.